The primary structure comprises 300 residues: Merozoite surface protein 2 (300 aa).

The signal sequence occupies residues 1–20 (MKVIKTLSIINFFIFVTFNI). 2 N-linked (GlcNAc...) asparagine glycosylation sites follow: N22 and N36. The polymorphic region stretch occupies residues 44-226 (EESKPPTGAV…EQTESPELQS (183 aa)). A 1; inverted repeat occupies 51–58 (GAVAGSGA). The interval 51–110 (GAVAGSGAGAGSGAGAVAGSGAGAVAGSGAGAVAGSGAGAVAGSGAGAVAGSGAVAGSGA) is 7 X 8 AA tandem repeats of G-S-G-A-G-A-V-A. Repeat copies occupy residues 61–68 (GSGAGAVA), 69–76 (GSGAGAVA), 77–84 (GSGAGAVA), 85–92 (GSGAGAVA), and 93–100 (GSGAGAVA). The 7; inverted repeat unit spans residues 103 to 110 (GAVAGSGA). The segment at 111-261 (GNGANPGADA…DSQKECTDGN (151 aa)) is disordered. The segment covering 123 to 148 (SPSTPATTTTTTTTNDAEASTSTSSE) has biased composition (low complexity). Positions 149-165 (NRNHNNAETNPKGKGEV) are enriched in basic and acidic residues. Polar residues-rich tracts occupy residues 167–193 (KPNQ…NVPR) and 200–228 (KSPT…QSAP). A glycan (N-linked (GlcNAc...) asparagine) is linked at N177. N249 is a glycosylation site (N-linked (GlcNAc...) asparagine). A disulfide bridge links C257 with C265. N-linked (GlcNAc...) asparagine glycans are attached at residues N273 and N274. Residue N274 is the site of GPI-anchor amidated asparagine attachment. The propeptide at 275–300 (SSNIASINKFVVLISATLVLSFAIFI) is removed in mature form.

It localises to the cell membrane. May play a role in the merozoite attachment to the erythrocyte. The sequence is that of Merozoite surface protein 2 from Plasmodium falciparum (isolate imr143).